Reading from the N-terminus, the 2131-residue chain is Protein Ycf2 (2131 aa).

An ATP-binding site is contributed by 1484 to 1491; sequence GSIGTGRS.

It belongs to the Ycf2 family.

It localises to the plastid. The protein resides in the chloroplast stroma. Probable ATPase of unknown function. Its presence in a non-photosynthetic plant (Epifagus virginiana) and experiments in tobacco indicate that it has an essential function which is probably not related to photosynthesis. This Spinacia oleracea (Spinach) protein is Protein Ycf2 (ycf2-A).